Consider the following 1173-residue polypeptide: DNA-directed RNA polymerase subunit beta (1173 aa).

It belongs to the RNA polymerase beta chain family. As to quaternary structure, the RNAP catalytic core consists of 2 alpha, 1 beta, 1 beta' and 1 omega subunit. When a sigma factor is associated with the core the holoenzyme is formed, which can initiate transcription.

The enzyme catalyses RNA(n) + a ribonucleoside 5'-triphosphate = RNA(n+1) + diphosphate. DNA-dependent RNA polymerase catalyzes the transcription of DNA into RNA using the four ribonucleoside triphosphates as substrates. The protein is DNA-directed RNA polymerase subunit beta of Kosmotoga olearia (strain ATCC BAA-1733 / DSM 21960 / TBF 19.5.1).